The chain runs to 261 residues: Imidazole glycerol phosphate synthase subunit HisF (261 aa).

Catalysis depends on residues Asp16 and Asp135.

The protein belongs to the HisA/HisF family. As to quaternary structure, heterodimer of HisH and HisF.

It is found in the cytoplasm. It carries out the reaction 5-[(5-phospho-1-deoxy-D-ribulos-1-ylimino)methylamino]-1-(5-phospho-beta-D-ribosyl)imidazole-4-carboxamide + L-glutamine = D-erythro-1-(imidazol-4-yl)glycerol 3-phosphate + 5-amino-1-(5-phospho-beta-D-ribosyl)imidazole-4-carboxamide + L-glutamate + H(+). The protein operates within amino-acid biosynthesis; L-histidine biosynthesis; L-histidine from 5-phospho-alpha-D-ribose 1-diphosphate: step 5/9. IGPS catalyzes the conversion of PRFAR and glutamine to IGP, AICAR and glutamate. The HisF subunit catalyzes the cyclization activity that produces IGP and AICAR from PRFAR using the ammonia provided by the HisH subunit. This Mycobacterium marinum (strain ATCC BAA-535 / M) protein is Imidazole glycerol phosphate synthase subunit HisF.